A 352-amino-acid chain; its full sequence is Anthranilate phosphoribosyltransferase (352 aa).

5-phospho-alpha-D-ribose 1-diphosphate-binding positions include G83, 86-87, T91, 93-96, 111-119, and A123; these read GD, NIST, and KHGGRSVSS. Residue G83 coordinates anthranilate. S95 lines the Mg(2+) pocket. R169 is a binding site for anthranilate. Mg(2+) is bound by residues D228 and E229.

This sequence belongs to the anthranilate phosphoribosyltransferase family. In terms of assembly, homodimer. Mg(2+) serves as cofactor.

The catalysed reaction is N-(5-phospho-beta-D-ribosyl)anthranilate + diphosphate = 5-phospho-alpha-D-ribose 1-diphosphate + anthranilate. It functions in the pathway amino-acid biosynthesis; L-tryptophan biosynthesis; L-tryptophan from chorismate: step 2/5. In terms of biological role, catalyzes the transfer of the phosphoribosyl group of 5-phosphorylribose-1-pyrophosphate (PRPP) to anthranilate to yield N-(5'-phosphoribosyl)-anthranilate (PRA). This is Anthranilate phosphoribosyltransferase from Neisseria meningitidis serogroup C (strain 053442).